The chain runs to 748 residues: Malate synthase G (748 aa).

Acetyl-CoA contacts are provided by residues Val-141, 148–149, Ser-298, and Arg-335; that span reads RF. The Proton acceptor role is filled by Arg-362. Glyoxylate is bound by residues Arg-362, Glu-453, and 478–481; that span reads GFLD. Residues Glu-453 and Asp-481 each contribute to the Mg(2+) site. Residue Pro-562 coordinates acetyl-CoA. Cys-639 is modified (cysteine sulfenic acid (-SOH)). Asp-653 functions as the Proton donor in the catalytic mechanism.

This sequence belongs to the malate synthase family. GlcB subfamily. As to quaternary structure, monomer. The cofactor is Mg(2+).

It is found in the cytoplasm. The enzyme catalyses glyoxylate + acetyl-CoA + H2O = (S)-malate + CoA + H(+). The protein operates within carbohydrate metabolism; glyoxylate cycle; (S)-malate from isocitrate: step 2/2. In terms of biological role, involved in the glycolate utilization. Catalyzes the condensation and subsequent hydrolysis of acetyl-coenzyme A (acetyl-CoA) and glyoxylate to form malate and CoA. This is Malate synthase G from Corynebacterium efficiens (strain DSM 44549 / YS-314 / AJ 12310 / JCM 11189 / NBRC 100395).